The following is a 234-amino-acid chain: 7-carboxy-7-deazaguanine synthase (234 aa).

The tract at residues M1–A28 is disordered. The span at I13–S23 shows a compositional bias: low complexity. Substrate-binding positions include L42–G44 and R57. A Radical SAM core domain is found at T48–P234. C61, C65, and C68 together coordinate [4Fe-4S] cluster. T70 provides a ligand contact to Mg(2+). Position 100 (T100) interacts with substrate. G102 contributes to the S-adenosyl-L-methionine binding site. Residue P234 participates in substrate binding.

It belongs to the radical SAM superfamily. 7-carboxy-7-deazaguanine synthase family. Homodimer. [4Fe-4S] cluster is required as a cofactor. S-adenosyl-L-methionine serves as cofactor. Requires Mg(2+) as cofactor.

The enzyme catalyses 6-carboxy-5,6,7,8-tetrahydropterin + H(+) = 7-carboxy-7-deazaguanine + NH4(+). The protein operates within purine metabolism; 7-cyano-7-deazaguanine biosynthesis. Catalyzes the complex heterocyclic radical-mediated conversion of 6-carboxy-5,6,7,8-tetrahydropterin (CPH4) to 7-carboxy-7-deazaguanine (CDG), a step common to the biosynthetic pathways of all 7-deazapurine-containing compounds. In Methanospirillum hungatei JF-1 (strain ATCC 27890 / DSM 864 / NBRC 100397 / JF-1), this protein is 7-carboxy-7-deazaguanine synthase.